The primary structure comprises 188 residues: Methylamine dehydrogenase light chain (188 aa).

The tat-type signal signal peptide spans 1-57 (MLGNFRFDDMVEKLSRRVAGQTSRRSVIGKLGTAMLGIGLVPLLPVDRRGRVSRANA). 6 cysteine pairs are disulfide-bonded: Cys-80–Cys-145, Cys-86–Cys-118, Cys-93–Cys-178, Cys-95–Cys-143, Cys-103–Cys-134, and Cys-135–Cys-166. Residue Trp-114 is modified to Tryptophylquinone. The segment at residues 114–165 (WVASCYNPTDGQSYLIAYRDCCGYNVSGRCPCLNTEGELPVYRPEFANDIIW) is a cross-link (tryptophan tryptophylquinone (Trp-Trp)).

It belongs to the aromatic amine dehydrogenase light chain family. In terms of assembly, heterotetramer of two light and two heavy chains. Requires tryptophan tryptophylquinone residue as cofactor. Predicted to be exported by the Tat system. The position of the signal peptide cleavage has not been experimentally proven. Post-translationally, tryptophan tryptophylquinone (TTQ) is formed by oxidation of the indole ring of a tryptophan to form tryptophylquinone followed by covalent cross-linking with another tryptophan residue.

It localises to the periplasm. The enzyme catalyses 2 oxidized [amicyanin] + methylamine + H2O = 2 reduced [amicyanin] + formaldehyde + NH4(+) + 2 H(+). Its pathway is one-carbon metabolism; methylamine degradation; formaldehyde from methylamine: step 1/1. Functionally, methylamine dehydrogenase carries out the oxidation of methylamine. Electrons are passed from methylamine dehydrogenase to amicyanin. The chain is Methylamine dehydrogenase light chain (mauA) from Paracoccus denitrificans.